The primary structure comprises 486 residues: 2-isopropylmalate synthase (486 aa).

The Pyruvate carboxyltransferase domain occupies 4 to 266 (VYIFDTTLRD…KTDVNLKEIA (263 aa)). Residues Asp-13, His-201, His-203, and Asn-237 each coordinate Mn(2+). Positions 390–486 (KVEIIHVTSG…LSTDIIEASA (97 aa)) are regulatory domain.

The protein belongs to the alpha-IPM synthase/homocitrate synthase family. LeuA type 1 subfamily. Mn(2+) serves as cofactor.

It localises to the cytoplasm. It carries out the reaction 3-methyl-2-oxobutanoate + acetyl-CoA + H2O = (2S)-2-isopropylmalate + CoA + H(+). It functions in the pathway amino-acid biosynthesis; L-leucine biosynthesis; L-leucine from 3-methyl-2-oxobutanoate: step 1/4. In terms of biological role, catalyzes the condensation of the acetyl group of acetyl-CoA with 3-methyl-2-oxobutanoate (2-ketoisovalerate) to form 3-carboxy-3-hydroxy-4-methylpentanoate (2-isopropylmalate). In Pyrococcus abyssi (strain GE5 / Orsay), this protein is 2-isopropylmalate synthase.